Consider the following 221-residue polypeptide: Urease accessory protein UreE (221 aa).

The interval Val160–Lys194 is disordered. The segment covering Thr177–Lys194 has biased composition (basic and acidic residues).

It belongs to the UreE family.

Its subcellular location is the cytoplasm. Involved in urease metallocenter assembly. Binds nickel. Probably functions as a nickel donor during metallocenter assembly. The sequence is that of Urease accessory protein UreE from Bifidobacterium longum subsp. infantis (strain ATCC 15697 / DSM 20088 / JCM 1222 / NCTC 11817 / S12).